The sequence spans 354 residues: MTSPLITKAEVNSVFQGRSLLAEKDFTPAEINYLVDFGLHLKALKQQNIPHHYLEGKNIALLFAKTSTRTRAAFTTAAIDLGAHPEYLGANDIQLGIKESTEDTARVLGSMFDAIERRGFSQKEVEDLAKYSGVPVWNGLTDDWHPTQMIADFMTVKENFGHLKGLTLVYVGDGRNNMANSLIVTGSMLGVNVHIVAPDSLHPTKEVMDIANKFAEKSGAKPLATSNIEEGVKGANIIYSDVWVSMGESNWEERVKLLTPYRITMDMLKMTGNADNGQLIFMHCLPAFHDTETEYGKEIKEKYGLTEMEVTDEVFRSKYARQFEEAENRMHSIKAIMAATLGNLFIPAVPEDFK.

Residues 67–70 (STRT), Gln-94, Arg-118, and 145–148 (HPTQ) contribute to the carbamoyl phosphate site. Residues Asn-177, Asp-241, and 245-246 (SM) each bind L-ornithine. Carbamoyl phosphate is bound by residues 284–285 (CL) and Arg-329.

The protein belongs to the aspartate/ornithine carbamoyltransferase superfamily. OTCase family.

The protein localises to the cytoplasm. The enzyme catalyses carbamoyl phosphate + L-ornithine = L-citrulline + phosphate + H(+). It participates in amino-acid degradation; L-arginine degradation via ADI pathway; carbamoyl phosphate from L-arginine: step 2/2. Reversibly catalyzes the transfer of the carbamoyl group from carbamoyl phosphate (CP) to the N(epsilon) atom of ornithine (ORN) to produce L-citrulline. The sequence is that of Ornithine carbamoyltransferase, catabolic (arcB) from Lactococcus lactis subsp. lactis (strain IL1403) (Streptococcus lactis).